Consider the following 250-residue polypeptide: Nuclear transcription factor Y subunit C-4 (250 aa).

A compositionally biased stretch (low complexity) spans 1 to 10 (MDNNNNNNNQ). Disordered regions lie at residues 1–35 (MDNN…PSGS) and 209–250 (GVYA…DSQG). Positions 214 to 225 (PPSQAWQSVWQN) are enriched in polar residues. Over residues 227–242 (AGGGDDVSYGSGGSSG) the composition is skewed to gly residues.

It belongs to the NFYC/HAP5 subunit family. As to quaternary structure, heterotrimeric transcription factor composed of three components, NF-YA, NF-YB and NF-YC. NF-YB and NF-YC must interact and dimerize for NF-YA association and DNA binding. As to expression, ubiquitous. Present in etiolated seedlings.

The protein localises to the nucleus. Functionally, stimulates the transcription of various genes by recognizing and binding to a CCAAT motif in promoters. Involved in the abscisic acid (ABA) signaling pathway. The protein is Nuclear transcription factor Y subunit C-4 (NFYC4) of Arabidopsis thaliana (Mouse-ear cress).